A 211-amino-acid chain; its full sequence is Thiamine-phosphate synthase (211 aa).

4-amino-2-methyl-5-(diphosphooxymethyl)pyrimidine-binding positions include 36 to 40 (QLRDK) and asparagine 68. Positions 69 and 88 each coordinate Mg(2+). Serine 107 provides a ligand contact to 4-amino-2-methyl-5-(diphosphooxymethyl)pyrimidine. 133 to 135 (TKS) lines the 2-[(2R,5Z)-2-carboxy-4-methylthiazol-5(2H)-ylidene]ethyl phosphate pocket. 4-amino-2-methyl-5-(diphosphooxymethyl)pyrimidine is bound at residue lysine 136. Residues glycine 164 and 184 to 185 (IS) contribute to the 2-[(2R,5Z)-2-carboxy-4-methylthiazol-5(2H)-ylidene]ethyl phosphate site.

The protein belongs to the thiamine-phosphate synthase family. Requires Mg(2+) as cofactor.

The enzyme catalyses 2-[(2R,5Z)-2-carboxy-4-methylthiazol-5(2H)-ylidene]ethyl phosphate + 4-amino-2-methyl-5-(diphosphooxymethyl)pyrimidine + 2 H(+) = thiamine phosphate + CO2 + diphosphate. It carries out the reaction 2-(2-carboxy-4-methylthiazol-5-yl)ethyl phosphate + 4-amino-2-methyl-5-(diphosphooxymethyl)pyrimidine + 2 H(+) = thiamine phosphate + CO2 + diphosphate. The catalysed reaction is 4-methyl-5-(2-phosphooxyethyl)-thiazole + 4-amino-2-methyl-5-(diphosphooxymethyl)pyrimidine + H(+) = thiamine phosphate + diphosphate. It participates in cofactor biosynthesis; thiamine diphosphate biosynthesis; thiamine phosphate from 4-amino-2-methyl-5-diphosphomethylpyrimidine and 4-methyl-5-(2-phosphoethyl)-thiazole: step 1/1. Functionally, condenses 4-methyl-5-(beta-hydroxyethyl)thiazole monophosphate (THZ-P) and 2-methyl-4-amino-5-hydroxymethyl pyrimidine pyrophosphate (HMP-PP) to form thiamine monophosphate (TMP). This Halalkalibacterium halodurans (strain ATCC BAA-125 / DSM 18197 / FERM 7344 / JCM 9153 / C-125) (Bacillus halodurans) protein is Thiamine-phosphate synthase.